The following is a 293-amino-acid chain: Cep170-like protein (293 aa).

2 disordered regions span residues 78 to 110 and 217 to 270; these read PPLV…LTIT and FPSA…AESE. Positions 227–245 are enriched in polar residues; the sequence is KQKSSPVNNHHSPGQTPTL.

This sequence belongs to the CEP170 family.

This chain is Cep170-like protein (CEP170P1), found in Homo sapiens (Human).